The sequence spans 223 residues: Ribonuclease T (223 aa).

The 175-residue stretch at 20-194 folds into the Exonuclease domain; sequence VVIDVETAGF…YDTERTAELF (175 aa). Mg(2+) is bound by residues D23, E25, H181, and D186. The active-site Proton donor/acceptor is the H181.

Belongs to the RNase T family. Homodimer. Mg(2+) serves as cofactor.

Its function is as follows. Trims short 3' overhangs of a variety of RNA species, leaving a one or two nucleotide 3' overhang. Responsible for the end-turnover of tRNA: specifically removes the terminal AMP residue from uncharged tRNA (tRNA-C-C-A). Also appears to be involved in tRNA biosynthesis. The polypeptide is Ribonuclease T (Shewanella sp. (strain W3-18-1)).